The primary structure comprises 290 residues: uncharacterized protein (290 aa).

6 helical membrane-spanning segments follow: residues 71-91 (FWSF…VKNI), 124-144 (GILI…LPGM), 155-175 (IIIG…YILV), 202-222 (FILV…LQLV), 234-254 (MFSI…VLTP), and 262-282 (ILLS…VLVV).

It belongs to the TatC family.

It is found in the plastid. Its subcellular location is the chloroplast membrane. This is an uncharacterized protein from Guillardia theta (Cryptophyte).